A 105-amino-acid chain; its full sequence is Integration host factor subunit beta (105 aa).

This sequence belongs to the bacterial histone-like protein family. Heterodimer of an alpha and a beta chain.

Functionally, this protein is one of the two subunits of integration host factor, a specific DNA-binding protein that functions in genetic recombination as well as in transcriptional and translational control. In Nitrosomonas eutropha (strain DSM 101675 / C91 / Nm57), this protein is Integration host factor subunit beta.